The primary structure comprises 1226 residues: DNA-directed RNA polymerase subunit beta (1226 aa).

Belongs to the RNA polymerase beta chain family. As to quaternary structure, the RNAP catalytic core consists of 2 alpha, 1 beta, 1 beta' and 1 omega subunit. When a sigma factor is associated with the core the holoenzyme is formed, which can initiate transcription.

The catalysed reaction is RNA(n) + a ribonucleoside 5'-triphosphate = RNA(n+1) + diphosphate. Functionally, DNA-dependent RNA polymerase catalyzes the transcription of DNA into RNA using the four ribonucleoside triphosphates as substrates. The chain is DNA-directed RNA polymerase subunit beta from Leptospira interrogans serogroup Icterohaemorrhagiae serovar copenhageni (strain Fiocruz L1-130).